The primary structure comprises 874 residues: Alanine--tRNA ligase (874 aa).

Residues His562, His566, Cys664, and His668 each coordinate Zn(2+).

Belongs to the class-II aminoacyl-tRNA synthetase family. Zn(2+) is required as a cofactor.

Its subcellular location is the cytoplasm. It catalyses the reaction tRNA(Ala) + L-alanine + ATP = L-alanyl-tRNA(Ala) + AMP + diphosphate. In terms of biological role, catalyzes the attachment of alanine to tRNA(Ala) in a two-step reaction: alanine is first activated by ATP to form Ala-AMP and then transferred to the acceptor end of tRNA(Ala). Also edits incorrectly charged Ser-tRNA(Ala) and Gly-tRNA(Ala) via its editing domain. This chain is Alanine--tRNA ligase, found in Shewanella sp. (strain ANA-3).